A 113-amino-acid polypeptide reads, in one-letter code: Tubulin-folding cofactor A (113 aa).

Residues 83-113 (LEETDEKEGPEIEDAKKTVADVEKQFPTEDA) are disordered. A compositionally biased stretch (basic and acidic residues) spans 89–113 (KEGPEIEDAKKTVADVEKQFPTEDA).

The protein belongs to the TBCA family. Monomer. Supercomplex made of cofactors A to E. Cofactors A and D function by capturing and stabilizing tubulin in a quasi-native conformation. Cofactor E binds to the cofactor D-tubulin complex; interaction with cofactor C then causes the release of tubulin polypeptides that are committed to the native state. Interacts with TUBB9. As to expression, expressed in leaves, roots, flowers and stems.

Tubulin-folding protein involved in the control of the alpha-/beta-tubulin monomer balance. Functions as a reservoir of bound and non-toxic beta-tubulin. Required in the developing embryo. The polypeptide is Tubulin-folding cofactor A (TFCA) (Arabidopsis thaliana (Mouse-ear cress)).